Here is a 319-residue protein sequence, read N- to C-terminus: Ferrochelatase (319 aa).

2 residues coordinate Fe cation: histidine 193 and glutamate 274.

The protein belongs to the ferrochelatase family.

Its subcellular location is the cytoplasm. The catalysed reaction is heme b + 2 H(+) = protoporphyrin IX + Fe(2+). It functions in the pathway porphyrin-containing compound metabolism; protoheme biosynthesis; protoheme from protoporphyrin-IX: step 1/1. Functionally, catalyzes the ferrous insertion into protoporphyrin IX. This Actinobacillus pleuropneumoniae serotype 3 (strain JL03) protein is Ferrochelatase.